The primary structure comprises 145 residues: MNNERLDNISNSLGISKRKRTLFELEQISDNEMKLIIKNGKLNLSVPWFGMSGNTPCTLVPAGLFEAIINTLKNAQKENFELKLEKSIWQHIPVDFGDVWSVAIDEIKKSKFKKEPNLDRVVKKIKKEHPNLFVDMQSLIQSKEN.

The protein belongs to the UPF0763 family.

The sequence is that of UPF0763 protein CFF8240_1572 from Campylobacter fetus subsp. fetus (strain 82-40).